The sequence spans 98 residues: NADH-ubiquinone oxidoreductase chain 4L (98 aa).

The next 3 membrane-spanning stretches (helical) occupy residues 1 to 21 (MTPV…GLAF), 29 to 49 (ALLC…LWAL), and 58 to 78 (VAPM…LALL).

Belongs to the complex I subunit 4L family.

It is found in the mitochondrion membrane. The enzyme catalyses a ubiquinone + NADH + 5 H(+)(in) = a ubiquinol + NAD(+) + 4 H(+)(out). Core subunit of the mitochondrial membrane respiratory chain NADH dehydrogenase (Complex I) which catalyzes electron transfer from NADH through the respiratory chain, using ubiquinone as an electron acceptor. Part of the enzyme membrane arm which is embedded in the lipid bilayer and involved in proton translocation. In Oncorhynchus clarkii (Cutthroat trout), this protein is NADH-ubiquinone oxidoreductase chain 4L (MT-ND4L).